A 153-amino-acid polypeptide reads, in one-letter code: 3-hydroxyacyl-[acyl-carrier-protein] dehydratase FabZ (153 aa).

Residue H57 is part of the active site.

Belongs to the thioester dehydratase family. FabZ subfamily.

It is found in the cytoplasm. It carries out the reaction a (3R)-hydroxyacyl-[ACP] = a (2E)-enoyl-[ACP] + H2O. In terms of biological role, involved in unsaturated fatty acids biosynthesis. Catalyzes the dehydration of short chain beta-hydroxyacyl-ACPs and long chain saturated and unsaturated beta-hydroxyacyl-ACPs. This Aeromonas hydrophila subsp. hydrophila (strain ATCC 7966 / DSM 30187 / BCRC 13018 / CCUG 14551 / JCM 1027 / KCTC 2358 / NCIMB 9240 / NCTC 8049) protein is 3-hydroxyacyl-[acyl-carrier-protein] dehydratase FabZ.